Reading from the N-terminus, the 94-residue chain is Acylphosphatase (94 aa).

The 88-residue stretch at Arg-3–Tyr-90 folds into the Acylphosphatase-like domain. Active-site residues include Arg-18 and Asn-36.

Belongs to the acylphosphatase family.

It carries out the reaction an acyl phosphate + H2O = a carboxylate + phosphate + H(+). This chain is Acylphosphatase (acyP), found in Geobacillus thermodenitrificans (strain NG80-2).